A 190-amino-acid polypeptide reads, in one-letter code: Vascular endothelial growth factor A (190 aa).

Residues 1–26 (MNFLLSWVHWSLALLLYLHHAKWSQA) form the signal peptide. 3 cysteine pairs are disulfide-bonded: cysteine 51/cysteine 93, cysteine 82/cysteine 127, and cysteine 86/cysteine 129. Asparagine 100 is a glycosylation site (N-linked (GlcNAc...) asparagine).

It belongs to the PDGF/VEGF growth factor family. Homodimer; disulfide-linked. Also found as heterodimer with PGF. Interacts with NRP1. Interacts with isoform 2 of BSG. Interacts with CD82; this interaction inhibits VEGFA-mediated signaling pathway.

It localises to the secreted. In terms of biological role, growth factor active in angiogenesis, vasculogenesis and endothelial cell growth. Induces endothelial cell proliferation, promotes cell migration, inhibits apoptosis and induces permeabilization of blood vessels. Binds to the FLT1/VEGFR1 and KDR/VEGFR2 receptors, heparan sulfate and heparin. Binding to NRP1 receptor initiates a signaling pathway needed for motor neuron axon guidance and cell body migration, including for the caudal migration of facial motor neurons from rhombomere 4 to rhombomere 6 during embryonic development. Also binds the DEAR/FBXW7-AS1 receptor. This chain is Vascular endothelial growth factor A (VEGFA), found in Equus caballus (Horse).